The chain runs to 408 residues: tRNA-specific 2-thiouridylase MnmA (408 aa).

ATP contacts are provided by residues 38-45 (GMSGGVDS) and methionine 64. The tract at residues 124 to 126 (NPD) is interaction with target base in tRNA. Catalysis depends on cysteine 129, which acts as the Nucleophile. Cysteine 129 and cysteine 231 are oxidised to a cystine. Glycine 153 is a binding site for ATP. The interaction with tRNA stretch occupies residues 181–183 (KDQ). The active-site Cysteine persulfide intermediate is cysteine 231. The interaction with tRNA stretch occupies residues 348-349 (RY).

Belongs to the MnmA/TRMU family.

Its subcellular location is the cytoplasm. It carries out the reaction S-sulfanyl-L-cysteinyl-[protein] + uridine(34) in tRNA + AH2 + ATP = 2-thiouridine(34) in tRNA + L-cysteinyl-[protein] + A + AMP + diphosphate + H(+). Catalyzes the 2-thiolation of uridine at the wobble position (U34) of tRNA, leading to the formation of s(2)U34. The protein is tRNA-specific 2-thiouridylase MnmA of Psychrobacter cryohalolentis (strain ATCC BAA-1226 / DSM 17306 / VKM B-2378 / K5).